Reading from the N-terminus, the 193-residue chain is Imidazoleglycerol-phosphate dehydratase (193 aa).

This sequence belongs to the imidazoleglycerol-phosphate dehydratase family.

The protein localises to the cytoplasm. The catalysed reaction is D-erythro-1-(imidazol-4-yl)glycerol 3-phosphate = 3-(imidazol-4-yl)-2-oxopropyl phosphate + H2O. The protein operates within amino-acid biosynthesis; L-histidine biosynthesis; L-histidine from 5-phospho-alpha-D-ribose 1-diphosphate: step 6/9. This chain is Imidazoleglycerol-phosphate dehydratase, found in Methanospirillum hungatei JF-1 (strain ATCC 27890 / DSM 864 / NBRC 100397 / JF-1).